Consider the following 115-residue polypeptide: Transmembrane protein 218 (115 aa).

Helical transmembrane passes span 5-25 (VLGV…VLLL), 38-58 (FSII…LLFP), and 81-101 (YVLL…LLTH).

It belongs to the TMEM218 family. Interacts with TMEM67.

It localises to the membrane. The protein resides in the cell projection. Its subcellular location is the cilium. May be involved in ciliary biogenesis or function. The chain is Transmembrane protein 218 (Tmem218) from Rattus norvegicus (Rat).